A 274-amino-acid polypeptide reads, in one-letter code: uncharacterized protein (274 aa).

This is an uncharacterized protein from Methanocaldococcus jannaschii (strain ATCC 43067 / DSM 2661 / JAL-1 / JCM 10045 / NBRC 100440) (Methanococcus jannaschii).